The primary structure comprises 207 residues: Probable nicotinate-nucleotide adenylyltransferase (207 aa).

This sequence belongs to the NadD family.

The enzyme catalyses nicotinate beta-D-ribonucleotide + ATP + H(+) = deamido-NAD(+) + diphosphate. It functions in the pathway cofactor biosynthesis; NAD(+) biosynthesis; deamido-NAD(+) from nicotinate D-ribonucleotide: step 1/1. In terms of biological role, catalyzes the reversible adenylation of nicotinate mononucleotide (NaMN) to nicotinic acid adenine dinucleotide (NaAD). The sequence is that of Probable nicotinate-nucleotide adenylyltransferase from Synechococcus sp. (strain JA-3-3Ab) (Cyanobacteria bacterium Yellowstone A-Prime).